The following is a 497-amino-acid chain: Envelope glycoprotein E (497 aa).

At 1-398 (MCVFQILIIV…GTIIYDILLT (398 aa)) the chain is on the virion surface side. Residues Asn-60, Asn-133, Asn-148, Asn-203, Asn-277, Asn-366, and Asn-388 are each glycosylated (N-linked (GlcNAc...) asparagine; by host). The helical transmembrane segment at 399–419 (SLSIGAIIIVIVGGVCIAILI) threads the bilayer. Over 420–497 (RRRRRRRTRG…KIRKRLDLYH (78 aa)) the chain is Intravirion.

This sequence belongs to the alphaherpesvirinae glycoprotein E family. Interacts with gI. Post-translationally, phosphorylated within the acidic cluster. Phosphorylation determines whether endocytosed viral gE traffics to the trans-Golgi network or recycles to the cell membrane.

The protein localises to the virion membrane. It localises to the host cell membrane. Its subcellular location is the host cell junction. It is found in the host Golgi apparatus membrane. The protein resides in the host endosome membrane. Functionally, in epithelial cells, the heterodimer gE/gI is required for the cell-to-cell spread of the virus, by sorting nascent virions to cell junctions. Once the virus reaches the cell junctions, virus particles can spread to adjacent cells extremely rapidly through interactions with cellular receptors that accumulate at these junctions. Implicated in basolateral spread in polarized cells. In neuronal cells, gE/gI is essential for the anterograde spread of the infection throughout the host nervous system. Together with US9, the heterodimer gE/gI is involved in the sorting and transport of viral structural components toward axon tips. The chain is Envelope glycoprotein E (MDV096) from Gallus gallus (Chicken).